Here is a 552-residue protein sequence, read N- to C-terminus: 5'-AMP-activated protein kinase catalytic subunit alpha-2 (552 aa).

The 253-residue stretch at 16 to 268 (YVLGDTLGVG…IKDIREHEWF (253 aa)) folds into the Protein kinase domain. ATP contacts are provided by residues 22-30 (LGVGTFGKV) and Lys-45. Asp-139 acts as the Proton acceptor in catalysis. Residue Thr-172 is modified to Phosphothreonine; by LKB1 and CaMKK2. Residue Thr-258 is modified to Phosphothreonine. Positions 291 to 376 (EAVKEVCEKF…PERMPPLIAD (86 aa)) are AIS. Phosphoserine is present on residues Ser-377 and Ser-491.

It belongs to the protein kinase superfamily. CAMK Ser/Thr protein kinase family. SNF1 subfamily. In terms of assembly, AMPK is a heterotrimer of an alpha catalytic subunit (PRKAA1 or PRKAA2), a beta (PRKAB1 or PRKAB2) and a gamma non-catalytic subunits (PRKAG1, PRKAG2 or PRKAG3). Interacts with FNIP1 and FNIP2. Interacts with DUSP29. Interacts with ARF6. The phosphorylated form at Thr-172 mediated by CamKK2 interacts with ACSS2. Requires Mg(2+) as cofactor. Post-translationally, ubiquitinated. Phosphorylated at Thr-172 by STK11/LKB1 in complex with STE20-related adapter-alpha (STRADA) pseudo kinase and CAB39. Also phosphorylated at Thr-172 by CAMKK2; triggered by a rise in intracellular calcium ions, without detectable changes in the AMP/ATP ratio. CAMKK1 can also phosphorylate Thr-172, but at much lower level. Dephosphorylated by protein phosphatase 2A and 2C (PP2A and PP2C). Phosphorylated by ULK1; leading to negatively regulate AMPK activity and suggesting the existence of a regulatory feedback loop between ULK1 and AMPK. Dephosphorylated by PPM1A and PPM1B at Thr-172 (mediated by STK11/LKB1).

Its subcellular location is the cytoplasm. The protein resides in the nucleus. It carries out the reaction L-seryl-[protein] + ATP = O-phospho-L-seryl-[protein] + ADP + H(+). The enzyme catalyses L-threonyl-[protein] + ATP = O-phospho-L-threonyl-[protein] + ADP + H(+). It catalyses the reaction L-seryl-[acetyl-CoA carboxylase] + ATP = O-phospho-L-seryl-[acetyl-CoA carboxylase] + ADP + H(+). The catalysed reaction is L-seryl-[3-hydroxy-3-methylglutaryl-coenzyme A reductase] + ATP = O-phospho-L-seryl-[3-hydroxy-3-methylglutaryl-coenzyme A reductase] + ADP + H(+). Its activity is regulated as follows. Activated by phosphorylation on Thr-172. Binding of AMP to non-catalytic gamma subunit (PRKAG1, PRKAG2 or PRKAG3) results in allosteric activation, inducing phosphorylation on Thr-172. AMP-binding to gamma subunit also sustains activity by preventing dephosphorylation of Thr-172. ADP also stimulates Thr-172 phosphorylation, without stimulating already phosphorylated AMPK. ATP promotes dephosphorylation of Thr-172, rendering the enzyme inactive. Under physiological conditions AMPK mainly exists in its inactive form in complex with ATP, which is much more abundant than AMP. Selectively inhibited by compound C (6-[4-(2-Piperidin-1-yl-ethoxy)-phenyl)]-3-pyridin-4-yl-pyyrazolo[1,5-a] pyrimidine. Activated by resveratrol, a natural polyphenol present in red wine, and S17834, a synthetic polyphenol. Salicylate/aspirin directly activates kinase activity, primarily by inhibiting Thr-172 dephosphorylation. In terms of biological role, catalytic subunit of AMP-activated protein kinase (AMPK), an energy sensor protein kinase that plays a key role in regulating cellular energy metabolism. In response to reduction of intracellular ATP levels, AMPK activates energy-producing pathways and inhibits energy-consuming processes: inhibits protein, carbohydrate and lipid biosynthesis, as well as cell growth and proliferation. AMPK acts via direct phosphorylation of metabolic enzymes, and by longer-term effects via phosphorylation of transcription regulators. Regulates lipid synthesis by phosphorylating and inactivating lipid metabolic enzymes such as ACACA, ACACB, GYS1, HMGCR and LIPE; regulates fatty acid and cholesterol synthesis by phosphorylating acetyl-CoA carboxylase (ACACA and ACACB) and hormone-sensitive lipase (LIPE) enzymes, respectively. Promotes lipolysis of lipid droplets by mediating phosphorylation of isoform 1 of CHKA (CHKalpha2). Regulates insulin-signaling and glycolysis by phosphorylating IRS1, PFKFB2 and PFKFB3. Involved in insulin receptor/INSR internalization. AMPK stimulates glucose uptake in muscle by increasing the translocation of the glucose transporter SLC2A4/GLUT4 to the plasma membrane, possibly by mediating phosphorylation of TBC1D4/AS160. Regulates transcription and chromatin structure by phosphorylating transcription regulators involved in energy metabolism such as CRTC2/TORC2, FOXO3, histone H2B, HDAC5, MEF2C, MLXIPL/ChREBP, EP300, HNF4A, p53/TP53, SREBF1, SREBF2 and PPARGC1A. Acts as a key regulator of glucose homeostasis in liver by phosphorylating CRTC2/TORC2, leading to CRTC2/TORC2 sequestration in the cytoplasm. In response to stress, phosphorylates 'Ser-36' of histone H2B (H2BS36ph), leading to promote transcription. Acts as a key regulator of cell growth and proliferation by phosphorylating FNIP1, TSC2, RPTOR, WDR24 and ATG1/ULK1: in response to nutrient limitation, negatively regulates the mTORC1 complex by phosphorylating RPTOR component of the mTORC1 complex and by phosphorylating and activating TSC2. Also phosphorylates and inhibits GATOR2 subunit WDR24 in response to nutrient limitation, leading to suppress glucose-mediated mTORC1 activation. In response to energetic stress, phosphorylates FNIP1, inactivating the non-canonical mTORC1 signaling, thereby promoting nuclear translocation of TFEB and TFE3, and inducing transcription of lysosomal or autophagy genes. In response to nutrient limitation, promotes autophagy by phosphorylating and activating ATG1/ULK1. In that process, it also activates WDR45/WIPI4. Phosphorylates CASP6, thereby preventing its autoprocessing and subsequent activation. AMPK also acts as a regulator of circadian rhythm by mediating phosphorylation of CRY1, leading to destabilize it. May regulate the Wnt signaling pathway by phosphorylating CTNNB1, leading to stabilize it. Also acts as a regulator of cellular polarity by remodeling the actin cytoskeleton; probably by indirectly activating myosin. Also phosphorylates CFTR, EEF2K, KLC1, NOS3 and SLC12A1. Plays an important role in the differential regulation of pro-autophagy (composed of PIK3C3, BECN1, PIK3R4 and UVRAG or ATG14) and non-autophagy (composed of PIK3C3, BECN1 and PIK3R4) complexes, in response to glucose starvation. Can inhibit the non-autophagy complex by phosphorylating PIK3C3 and can activate the pro-autophagy complex by phosphorylating BECN1. Upon glucose starvation, promotes ARF6 activation in a kinase-independent manner leading to cell migration. Upon glucose deprivation mediates the phosphorylation of ACSS2 at 'Ser-659', which exposes the nuclear localization signal of ACSS2, required for its interaction with KPNA1 and nuclear translocation. Upon stress, regulates mitochondrial fragmentation through phosphorylation of MTFR1L. The chain is 5'-AMP-activated protein kinase catalytic subunit alpha-2 from Mus musculus (Mouse).